The following is a 595-amino-acid chain: E3 ubiquitin-protein ligase synoviolin B (595 aa).

A helical transmembrane segment spans residues 1–19; that stretch reads MTGASLALTASVVAHAYYL. Topologically, residues 20–35 are lumenal; sequence KNQFYPTVVYLTKSSP. Residues 36–56 form a helical membrane-spanning segment; that stretch reads SMAILYIQAFVLVFLLGKFMG. Residues 57–92 lie on the Cytoplasmic side of the membrane; it reads KVFFGQLRAAEMEHLLERSWYAVTETCLAFTVFRDD. A helical membrane pass occupies residues 93–113; the sequence is FSPRFVALFTLLLFLKCFHWL. Topologically, residues 114–129 are lumenal; sequence AEDRVDFMERSPNISW. The helical transmembrane segment at 130–150 threads the bilayer; it reads LFHFRILALMLLLGVLDAFFV. The Cytoplasmic segment spans residues 151 to 163; that stretch reads SHAYNSLVTRGAS. Residues 164–184 traverse the membrane as a helical segment; the sequence is VQLVFGFEYAILMTMILAVFI. At 185–218 the chain is on the lumenal side; sequence KYILHSVDLQSENPWDNKAVYMLYTELFTGFIKV. The helical transmembrane segment at 219–239 threads the bilayer; that stretch reads LLYMAFMTIMVKVHTFPLFAI. The interaction with p53/TP53 stretch occupies residues 230 to 264; sequence KVHTFPLFAIRPMYLAMRQFKKAVTDAVMSRRAIR. The Cytoplasmic portion of the chain corresponds to 240-595; sequence RPMYLAMRQF…LQKLETTDSQ (356 aa). Zn(2+)-binding residues include C285, C288, C301, H303, H306, C309, C320, and C323. The RING-type; atypical zinc finger occupies 285-324; sequence CIICREEMVSGAKRLPCNHIFHTSCLRSWFQRQQTCPTCR. A compositionally biased stretch (low complexity) spans 335-353; it reads QPQTPAEQQNQHQAQQQPT. 2 disordered regions span residues 335–370 and 386–426; these read QPQT…LPPF and PVPG…PGAA. The segment covering 354–370 has biased composition (pro residues); it reads PVVPPQPNFPPGMLPPF. Positions 390–408 are enriched in low complexity; the sequence is APVGNPPDEANPGSSSGSS. A coiled-coil region spans residues 463 to 494; the sequence is EELRAMEGHERQNLEARLQCLQNIHTLLDAAM. A disordered region spans residues 509–595; it reads PPQPPVSSSS…LQKLETTDSQ (87 aa). Residues 514-552 show a composition bias toward low complexity; that stretch reads VSSSSSSSASASTEPTTSSVSEPVIDTSSIVTTDSSQQS.

The protein belongs to the HRD1 family. Homodimer.

The protein localises to the endoplasmic reticulum membrane. The enzyme catalyses S-ubiquitinyl-[E2 ubiquitin-conjugating enzyme]-L-cysteine + [acceptor protein]-L-lysine = [E2 ubiquitin-conjugating enzyme]-L-cysteine + N(6)-ubiquitinyl-[acceptor protein]-L-lysine.. It functions in the pathway protein modification; protein ubiquitination. In terms of biological role, E3 ubiquitin-protein ligase which accepts ubiquitin specifically from endoplasmic reticulum-associated UBC7 E2 ligase and transfers it to substrates, promoting their degradation. Component of the endoplasmic reticulum quality control (ERQC) system also called ER-associated degradation (ERAD) involved in ubiquitin-dependent degradation of misfolded endoplasmic reticulum proteins. Also promotes the degradation of normal but naturally short-lived proteins. Protects cells from ER stress-induced apoptosis. Sequesters p53 in the cytoplasm and promotes its degradation, thereby negatively regulating its biological function in transcription, cell cycle regulation and apoptosis. The sequence is that of E3 ubiquitin-protein ligase synoviolin B (syvn1-b) from Xenopus laevis (African clawed frog).